The primary structure comprises 220 residues: Octanoyltransferase (220 aa).

In terms of domain architecture, BPL/LPL catalytic spans 29 to 217; sequence GRAPEMIWLL…CFEETFGPLP (189 aa). Substrate is bound by residues 68 to 75, 148 to 150, and 161 to 163; these read RGGQYTYH, AIG, and GLS. The active-site Acyl-thioester intermediate is the Cys179.

Belongs to the LipB family.

The protein localises to the cytoplasm. It carries out the reaction octanoyl-[ACP] + L-lysyl-[protein] = N(6)-octanoyl-L-lysyl-[protein] + holo-[ACP] + H(+). It participates in protein modification; protein lipoylation via endogenous pathway; protein N(6)-(lipoyl)lysine from octanoyl-[acyl-carrier-protein]: step 1/2. In terms of biological role, catalyzes the transfer of endogenously produced octanoic acid from octanoyl-acyl-carrier-protein onto the lipoyl domains of lipoate-dependent enzymes. Lipoyl-ACP can also act as a substrate although octanoyl-ACP is likely to be the physiological substrate. In Dinoroseobacter shibae (strain DSM 16493 / NCIMB 14021 / DFL 12), this protein is Octanoyltransferase.